A 420-amino-acid polypeptide reads, in one-letter code: Glucose-1-phosphate adenylyltransferase (420 aa).

Alpha-D-glucose 1-phosphate-binding positions include Tyr-107, Gly-172, 187-188 (EK), and Ser-205.

The protein belongs to the bacterial/plant glucose-1-phosphate adenylyltransferase family. In terms of assembly, homotetramer.

The catalysed reaction is alpha-D-glucose 1-phosphate + ATP + H(+) = ADP-alpha-D-glucose + diphosphate. The protein operates within glycan biosynthesis; glycogen biosynthesis. Its function is as follows. Involved in the biosynthesis of ADP-glucose, a building block required for the elongation reactions to produce glycogen. Catalyzes the reaction between ATP and alpha-D-glucose 1-phosphate (G1P) to produce pyrophosphate and ADP-Glc. The polypeptide is Glucose-1-phosphate adenylyltransferase (Bradyrhizobium diazoefficiens (strain JCM 10833 / BCRC 13528 / IAM 13628 / NBRC 14792 / USDA 110)).